Reading from the N-terminus, the 517-residue chain is Cytochrome P450 monooxygenase bsc11 (517 aa).

Residues 16–33 (ALPLTCTGLIIIFAFYLS) traverse the membrane as a helical segment. Residue Asn204 is glycosylated (N-linked (GlcNAc...) asparagine). Heme is bound at residue Cys448.

The protein belongs to the cytochrome P450 family. Heme serves as cofactor.

It is found in the membrane. Its pathway is mycotoxin biosynthesis. Its function is as follows. Cytochrome P450 monooxygenase; part of the gene cluster that mediates the biosynthesis of the diterpene glucoside brassicicene C. In the first step of the brassicicene C biosynthesis, the bifunctional diterpene synthase bsc8 that possesses both prenyl transferase and terpene cyclase activity, converts isopentenyl diphosphate and dimethylallyl diphosphate into geranylgeranyl diphosphate (GGDP) that is further converted into fusicocca-2,10(14)-diene, the first precursor for brassicicene C. Fusicocca-2,10(14)-diene is then substrate of cytochrome P450 monooxygenase bsc1 for hydroxylation at the C-8 position. Oxidation at C-16 position to aldehyde is then catalyzed by the cytochrome P450 monooyxygenase bsc7, yielding fusicocca-2,10(14)-diene-8-beta,16-diol. Follows the isomerization of the double bond and reduction of aldehyde to alcohol catalyzed by the short-chain dehydrogenase/reductase bsc3 to yield the diol compound fusicocca-1,10(14)-diene-8 beta,16-diol. The next step is the oxidation at the C-3 position of fusicocca-2,10(14)-diene-8-beta,16-diol catalyzed by the alpha-ketoglutarate dependent dioxygenase bsc9, to produce a triol compound. Methylation of the hydroxy group at position 16 is performed by the methyltransferase bsc6. 16-O-methylation is followed by oxidation at the C-13 position to ketone and an alkyl shift of the methyl group leads to brassicicene C. Although the probable acetyltransferase bsc4 is included in the gene cluster, no acetylation reactions are necessary for brassicicene C biosynthesis. However, the fact that brassicicene E, which is a structurally related compound having an acetoxy group at position 12, was previously isolated from another strain of A.brassicicola suggests that the ATCC 96836 strain might also produce a small amount of brassicicene E. This chain is Cytochrome P450 monooxygenase bsc11, found in Alternaria brassicicola (Dark leaf spot agent).